A 277-amino-acid chain; its full sequence is Phosphoenolpyruvate synthase regulatory protein (277 aa).

ADP is bound at residue 157–164 (GVSRCGKT).

The protein belongs to the pyruvate, phosphate/water dikinase regulatory protein family. PSRP subfamily.

It carries out the reaction [pyruvate, water dikinase] + ADP = [pyruvate, water dikinase]-phosphate + AMP + H(+). The enzyme catalyses [pyruvate, water dikinase]-phosphate + phosphate + H(+) = [pyruvate, water dikinase] + diphosphate. Functionally, bifunctional serine/threonine kinase and phosphorylase involved in the regulation of the phosphoenolpyruvate synthase (PEPS) by catalyzing its phosphorylation/dephosphorylation. This is Phosphoenolpyruvate synthase regulatory protein from Escherichia coli O6:K15:H31 (strain 536 / UPEC).